We begin with the raw amino-acid sequence, 378 residues long: Zinc transporter 7 (378 aa).

Residues 1–37 (MLPLSIKDDEYKPPKFNLFGKISGWFRSILSDKTSRN) lie on the Cytoplasmic side of the membrane. Residues 38–58 (LFFFLCLNLSFAFVELLYGIW) form a helical membrane-spanning segment. Residues 59-67 (SNCLGLISD) lie on the Lumenal side of the membrane. Residues 68-88 (SFHMFFDSTAILAGLAASVIS) form a helical membrane-spanning segment. At 89–102 (KWRDNDAFSYGYVR) the chain is on the cytoplasmic side. A helical transmembrane segment spans residues 103–123 (AEVLAGFVNGLFLIFTAFFIF). Topologically, residues 124–140 (SEGVERALAPPDVHHER) are lumenal. Residues 141–161 (LLLVSILGFVVNLVGIFVFNH) traverse the membrane as a helical segment. Positions 161–220 (HGGHGHSHGSGHGHSHSLFNGALDHSHGHEDHCHSHEAKHGAAHSHDHDHAHGHGHLHSH) are his-rich loop. Over 162–238 (GGHGHSHGSG…AGPSRQILQG (77 aa)) the chain is Cytoplasmic. A compositionally biased stretch (basic and acidic residues) spans 186-223 (SHGHEDHCHSHEAKHGAAHSHDHDHAHGHGHLHSHDGP). Residues 186–224 (SHGHEDHCHSHEAKHGAAHSHDHDHAHGHGHLHSHDGPS) are disordered. Residues 239 to 259 (VFLHILADTLGSIGVIASAIM) traverse the membrane as a helical segment. Over 260 to 264 (MQNFG) the chain is Lumenal. The chain crosses the membrane as a helical span at residues 265-285 (LMIADPICSILIAILIVVSVI). Residues 286–378 (PLLRESVGIL…LYVQIDFAAM (93 aa)) lie on the Cytoplasmic side of the membrane.

Belongs to the cation diffusion facilitator (CDF) transporter (TC 2.A.4) family. SLC30A subfamily. In terms of assembly, homooligomer. Highly expressed in liver, spleen, duodenum and part of the jejunum of small intestine (at protein level). Moderately expressed in kidney, lung, and brain. Barely detectable in heart. In brain, expressed in cerebellum, cerebral cortex and hippocampus (at protein level).

It localises to the golgi apparatus membrane. It is found in the cytoplasmic vesicle. The protein resides in the golgi apparatus. Its subcellular location is the trans-Golgi network. The protein localises to the sarcoplasmic reticulum. It localises to the mitochondrion. It carries out the reaction Zn(2+)(in) = Zn(2+)(out). Functionally, zinc ion transporter mediating zinc entry from the cytosol into the lumen of organelles along the secretory pathway. By contributing to zinc ion homeostasis within the early secretory pathway, regulates the activation and folding of enzymes like alkaline phosphatases. This is Zinc transporter 7 from Mus musculus (Mouse).